The following is a 600-amino-acid chain: Myelin expression factor 2 (600 aa).

Residues 1–101 (MADANKAEVP…GEKKGPNRNR (101 aa)) form a disordered region. At Thr-13 the chain carries Phosphothreonine. Ser-17 carries the post-translational modification Phosphoserine. A compositionally biased stretch (basic and acidic residues) spans 27–42 (GEPRREPHPAEAEKQQ). A Glycyl lysine isopeptide (Lys-Gly) (interchain with G-Cter in SUMO2) cross-link involves residue Lys-53. 2 stretches are compositionally biased toward basic and acidic residues: residues 54-72 (MENDESAKEEKSDLKEKST) and 83-96 (YSKDKNSGAGEKKG). RRM domains follow at residues 100-178 (NRVF…EDPD) and 233-310 (STIF…MDDK). Arg-406 carries the omega-N-methylarginine modification. Phosphoserine is present on Ser-431. Residues 523–599 (NQIFVRNLPF…REIDVRLDRN (77 aa)) form the RRM 3 domain.

In terms of assembly, monomer.

The protein resides in the nucleus. Transcriptional repressor of the myelin basic protein gene (MBP). Binds to the proximal MB1 element 5'-TTGTCC-3' of the MBP promoter. Its binding to MB1 and function are inhibited by PURA. This is Myelin expression factor 2 (MYEF2) from Homo sapiens (Human).